Reading from the N-terminus, the 207-residue chain is Urease accessory protein UreG (207 aa).

12–19 (GPVGAGKT) contributes to the GTP binding site.

This sequence belongs to the SIMIBI class G3E GTPase family. UreG subfamily. In terms of assembly, homodimer. UreD, UreF and UreG form a complex that acts as a GTP-hydrolysis-dependent molecular chaperone, activating the urease apoprotein by helping to assemble the nickel containing metallocenter of UreC. The UreE protein probably delivers the nickel.

It is found in the cytoplasm. Its function is as follows. Facilitates the functional incorporation of the urease nickel metallocenter. This process requires GTP hydrolysis, probably effectuated by UreG. This is Urease accessory protein UreG from Cereibacter sphaeroides (strain KD131 / KCTC 12085) (Rhodobacter sphaeroides).